The primary structure comprises 798 residues: uncharacterized protein (798 aa).

Residues 1 to 13 show a composition bias toward low complexity; that stretch reads MSSSQSPSTPSAS. The transit peptide at 1-58 directs the protein to the chloroplast; it reads MSSSQSPSTPSASLVDSSDSKHPDDLPQIYKRRSVWTSSEDAVSSSNSPEQTTPFTVR. Disordered stretches follow at residues 1-99, 135-158, and 417-473; these read MSSS…WQDA, AEKK…SMCT, and TGLI…AEPS. Residues 35–55 show a composition bias toward polar residues; the sequence is VWTSSEDAVSSSNSPEQTTPF. A compositionally biased stretch (basic and acidic residues) spans 57 to 79; it reads VREDTNADIARELDLPDDPEPHL. Residues 137 to 146 show a composition bias toward basic residues; the sequence is KKKRKKKKKA. Over residues 462-473 the composition is skewed to low complexity; sequence AAPAEAQGAEPS. Positions 578–658 form a coiled coil; that stretch reads RSNMEVAGKL…MLSEARGLRD (81 aa). The disordered stretch occupies residues 749 to 798; the sequence is DDLKAPAPEPAPLSPGGHRSVESLADEAGITDQAGSLLPAKDNRPSEDLD. Ser762 carries the post-translational modification Phosphoserine. A compositionally biased stretch (basic and acidic residues) spans 789-798; sequence KDNRPSEDLD.

It is found in the plastid. The protein resides in the chloroplast. This is an uncharacterized protein from Arabidopsis thaliana (Mouse-ear cress).